A 74-amino-acid chain; its full sequence is MIQVAKIIGTGLATTGLIGAGIGIGVVFGSLIIGVSRNPSLKSQLFAYAILGFAFSEATGLFALMMAFLLLYVA.

A run of 2 helical transmembrane segments spans residues 16 to 36 (GLIG…IGVS) and 50 to 70 (ILGF…AFLL).

The protein belongs to the ATPase C chain family. F-type ATPases have 2 components, CF(1) - the catalytic core - and CF(0) - the membrane proton channel. CF(1) has five subunits: alpha(3), beta(3), gamma(1), delta(1), epsilon(1). CF(0) has three main subunits: a, b and c.

Its subcellular location is the mitochondrion inner membrane. Its function is as follows. Mitochondrial membrane ATP synthase (F(1)F(0) ATP synthase or Complex V) produces ATP from ADP in the presence of a proton gradient across the membrane which is generated by electron transport complexes of the respiratory chain. F-type ATPases consist of two structural domains, F(1) - containing the extramembraneous catalytic core and F(0) - containing the membrane proton channel, linked together by a central stalk and a peripheral stalk. During catalysis, ATP synthesis in the catalytic domain of F(1) is coupled via a rotary mechanism of the central stalk subunits to proton translocation. Part of the complex F(0) domain. A homomeric c-ring of probably 10 subunits is part of the complex rotary element. The chain is ATP synthase subunit 9, mitochondrial (atp-9) from Neurospora crassa (strain ATCC 24698 / 74-OR23-1A / CBS 708.71 / DSM 1257 / FGSC 987).